The following is a 517-amino-acid chain: AAA ATPase forming ring-shaped complexes (517 aa).

The stretch at 25–53 (ARNAKLVELLQASRTKLEEINGRLEALAE) forms a coiled coil. ATP is bound at residue 233-238 (GNGKTL).

This sequence belongs to the AAA ATPase family. Homohexamer. Assembles into a hexameric ring structure.

This chain is AAA ATPase forming ring-shaped complexes, found in Corynebacterium jeikeium (strain K411).